A 414-amino-acid polypeptide reads, in one-letter code: Esterase FrsA (414 aa).

The protein belongs to the FrsA family.

The enzyme catalyses a carboxylic ester + H2O = an alcohol + a carboxylate + H(+). Its function is as follows. Catalyzes the hydrolysis of esters. The sequence is that of Esterase FrsA from Escherichia coli O157:H7.